Reading from the N-terminus, the 232-residue chain is 7-cyano-7-deazaguanine synthase 2 (232 aa).

Residue 9-19 participates in ATP binding; it reads FSGGQDSTTCL. Residues cysteine 189, cysteine 198, cysteine 201, and cysteine 204 each coordinate Zn(2+).

It belongs to the QueC family. Zn(2+) is required as a cofactor.

The catalysed reaction is 7-carboxy-7-deazaguanine + NH4(+) + ATP = 7-cyano-7-deazaguanine + ADP + phosphate + H2O + H(+). The protein operates within purine metabolism; 7-cyano-7-deazaguanine biosynthesis. In terms of biological role, catalyzes the ATP-dependent conversion of 7-carboxy-7-deazaguanine (CDG) to 7-cyano-7-deazaguanine (preQ(0)). The chain is 7-cyano-7-deazaguanine synthase 2 from Pseudomonas fluorescens (strain ATCC BAA-477 / NRRL B-23932 / Pf-5).